The chain runs to 304 residues: Ferrochelatase (304 aa).

Positions 169 and 241 each coordinate Fe cation.

It belongs to the ferrochelatase family.

Its subcellular location is the cytoplasm. It catalyses the reaction heme b + 2 H(+) = protoporphyrin IX + Fe(2+). Its pathway is porphyrin-containing compound metabolism; protoheme biosynthesis; protoheme from protoporphyrin-IX: step 1/1. Functionally, catalyzes the ferrous insertion into protoporphyrin IX. The polypeptide is Ferrochelatase (Thermoplasma volcanium (strain ATCC 51530 / DSM 4299 / JCM 9571 / NBRC 15438 / GSS1)).